The following is a 517-amino-acid chain: T-complex protein 11-like protein 2 (517 aa).

The interval 1-59 is disordered; sequence MPFNGEKQYVNEDQQSDSESSRFSESTASLSDYGCSRQSFTSDSSSKSSSPASTSPPRG. Position 16 is a phosphoserine (Ser16). Residues 17 to 55 show a composition bias toward low complexity; it reads DSESSRFSESTASLSDYGCSRQSFTSDSSSKSSSPASTS.

Belongs to the TCP11 family. As to quaternary structure, interacts with FMNL2; this interaction promotes muscle-derived satellite cell (MDSC) migration and differentiation.

Its subcellular location is the cytoplasm. It localises to the cytoskeleton. Functionally, promotes the migration of muscle-derived satellite cells (MDSCs) during differentiation throught interaction with FMNL2 and therefore may participate in microfilament assembly. This is T-complex protein 11-like protein 2 from Rattus norvegicus (Rat).